We begin with the raw amino-acid sequence, 423 residues long: E3 ubiquitin-protein ligase makorin-2 (423 aa).

2 consecutive C3H1-type zinc fingers follow at residues Ser-2–Asn-29 and Ser-31–Pro-58. The disordered stretch occupies residues Ser-59–Gly-90. Residues Arg-61–Gly-90 show a composition bias toward gly residues. A C3H1-type 3 zinc finger spans residues Gln-162–Leu-189. Positions Cys-190–Ala-219 are makorin-type Cys-His. The segment at Cys-235–Arg-289 adopts an RING-type zinc-finger fold. Residues Gly-318 to Pro-347 form a C3H1-type 4 zinc finger.

Its subcellular location is the cytoplasm. The protein localises to the nucleus. The enzyme catalyses S-ubiquitinyl-[E2 ubiquitin-conjugating enzyme]-L-cysteine + [acceptor protein]-L-lysine = [E2 ubiquitin-conjugating enzyme]-L-cysteine + N(6)-ubiquitinyl-[acceptor protein]-L-lysine.. The protein operates within protein modification; protein ubiquitination. In terms of biological role, E3 ubiquitin ligase catalyzing the covalent attachment of ubiquitin moieties onto substrate proteins. Inhibits neurogenesis and axis formation during embryonic development by modulating the phosphatidylinositol 3-kinase (PI3K) pathway. Acts downstream of PI3K and akt1 to up-regulate gsk3b mRNA expression. The protein is E3 ubiquitin-protein ligase makorin-2 (mkrn2) of Seriola quinqueradiata (Five-ray yellowtail).